Reading from the N-terminus, the 208-residue chain is Probable GTP-binding protein EngB (208 aa).

Positions 22–195 (GLPEIALAGR…WGALEDIFVE (174 aa)) constitute an EngB-type G domain. GTP-binding positions include 30 to 37 (GRSNVGKS), 57 to 61 (GKTRT), 75 to 78 (DLPG), 142 to 145 (TKSD), and 174 to 176 (ISS). 2 residues coordinate Mg(2+): Ser-37 and Thr-59.

It belongs to the TRAFAC class TrmE-Era-EngA-EngB-Septin-like GTPase superfamily. EngB GTPase family. Requires Mg(2+) as cofactor.

Its function is as follows. Necessary for normal cell division and for the maintenance of normal septation. This Alkaliphilus metalliredigens (strain QYMF) protein is Probable GTP-binding protein EngB.